The chain runs to 208 residues: Pyrophosphate-energized proton pump 2 (208 aa).

Helical transmembrane passes span 19–39 (AYPL…TFFV), 54–74 (GLIV…SFTI), 89–109 (GGNL…IVVI), 140–160 (LAVS…GIIA), and 167–187 (LFGT…IVAL).

Belongs to the H(+)-translocating pyrophosphatase (TC 3.A.10) family. As to quaternary structure, homodimer. Mg(2+) is required as a cofactor.

Its subcellular location is the cell inner membrane. The catalysed reaction is diphosphate + H2O + H(+)(in) = 2 phosphate + 2 H(+)(out). In terms of biological role, proton pump that utilizes the energy of pyrophosphate hydrolysis as the driving force for proton movement across the membrane. Generates a proton motive force. The protein is Pyrophosphate-energized proton pump 2 (hppA2) of Mycoplana dimorpha.